Consider the following 710-residue polypeptide: Polyribonucleotide nucleotidyltransferase (710 aa).

Residues D489 and D495 each contribute to the Mg(2+) site. One can recognise a KH domain in the interval 556–615 (PKIDTIKIDVDKIKVVIGKGGETIDKIIAETGVKIDIDDEGNVSIYSSDQAAIDRTKEII). Residues 625–693 (GEVYHAKVIR…EKGRVDASMK (69 aa)) enclose the S1 motif domain. Residues 691–710 (SMKALIPRPPKPEKKEEKHD) form a disordered region. The span at 700–710 (PKPEKKEEKHD) shows a compositional bias: basic and acidic residues.

It belongs to the polyribonucleotide nucleotidyltransferase family. Mg(2+) is required as a cofactor.

It is found in the cytoplasm. It catalyses the reaction RNA(n+1) + phosphate = RNA(n) + a ribonucleoside 5'-diphosphate. Its function is as follows. Involved in mRNA degradation. Catalyzes the phosphorolysis of single-stranded polyribonucleotides processively in the 3'- to 5'-direction. In Streptococcus pyogenes serotype M4 (strain MGAS10750), this protein is Polyribonucleotide nucleotidyltransferase.